Reading from the N-terminus, the 809-residue chain is Glutamine--tRNA ligase (809 aa).

Basic and acidic residues predominate over residues 185–198 (DLIKKKTKNNEKKK). The interval 185–216 (DLIKKKTKNNEKKKTNSAKKSSDNSASSGPKR) is disordered. The 'HIGH' region motif lies at 258–268 (PEPNGYLHIGH). ATP is bound by residues 259-261 (EPN) and 265-271 (HIGHSKA). D291 contacts L-glutamine. S378 bears the Phosphoserine mark. Y440 is a binding site for L-glutamine. Residues T459, 488–489 (RL), and 496–498 (LSK) each bind ATP. A 'KMSKS' region motif is present at residues 495–499 (VLSKR).

It belongs to the class-I aminoacyl-tRNA synthetase family.

It carries out the reaction tRNA(Gln) + L-glutamine + ATP = L-glutaminyl-tRNA(Gln) + AMP + diphosphate. The polypeptide is Glutamine--tRNA ligase (GLN4) (Saccharomyces cerevisiae (strain ATCC 204508 / S288c) (Baker's yeast)).